The primary structure comprises 20 residues: 23 kDa cell wall protein (20 aa).

It localises to the secreted. The protein localises to the cell wall. This Arabidopsis thaliana (Mouse-ear cress) protein is 23 kDa cell wall protein.